Here is a 563-residue protein sequence, read N- to C-terminus: Arginine--tRNA ligase (563 aa).

Positions 121 to 131 (PNIAKPFSIGH) match the 'HIGH' region motif.

The protein belongs to the class-I aminoacyl-tRNA synthetase family. In terms of assembly, monomer.

Its subcellular location is the cytoplasm. The catalysed reaction is tRNA(Arg) + L-arginine + ATP = L-arginyl-tRNA(Arg) + AMP + diphosphate. The polypeptide is Arginine--tRNA ligase (Streptococcus pneumoniae (strain P1031)).